Reading from the N-terminus, the 993-residue chain is MAVLKLTDQPPLVQAIFSGDPEEIRMLIHKTEDVNTLDSEKRTPLHVAAFLGDAEIIELLILSGARVNAKDNMWLTPLHRAVASRSEEAVQVLIKHSADVNARDKNWQTPLHVAAANKAVKCAEVIIPLLSSVNVSDRGGRTALHHAALNGHVEMVNLLLAKGANINAFDKKDRRALHWAAYMGHLDVVALLINHGAEVTCKDKKGYTPLHAAASNGQINVVKHLLNLGVEIDEINVYGNTALHIACYNGQDAVVNELIDYGANVNQPNNNGFTPLHFAAASTHGALCLELLVNNGADVNIQSKDGKSPLHMTAVHGRFTRSQTLIQNGGEIDCVDKDGNTPLHVAARYGHELLINTLITSGADTAKCGIHSMFPLHLAALNAHSDCCRKLLSSGFEIDTPDKFGRTCLHAAAAGGNVECIKLLQSSGADFHKKDKCGRTPLHYAAANCHFHCIETLVTTGANVNETDDWGRTALHYAAASDMDRNKTILGNAHDNSEELERARELKEKEATLCLEFLLQNDANPSIRDKEGYNSIHYAAAYGHRQCLELLLERTNSGFEESDSGATKSPLHLAAYNGHHQALEVLLQSLVDLDIRDEKGRTALDLAAFKGHTECVEALINQGASIFVKDNVTKRTPLHASVINGHTLCLRLLLEIADNPEAVDVKDAKGQTPLMLAVAYGHIDAVSLLLEKEANVDTVDILGCTALHRGIMTGHEECVQMLLEQEVSILCKDSRGRTPLHYAAARGHATWLSELLQMALSEEDCCFKDNQGYTPLHWACYNGNENCIEVLLEQKCFRKFIGNPFTPLHCAIINDHGNCASLLLGAIDSSIVSCRDDKGRTPLHAAAFADHVECLQLLLRHSAPVNAVDNSGKTALMMAAENGQAGAVDILVNSAQADLTVKDKDLNTPLHLACSKGHEKCALLILDKIQDESLINEKNNALQTPLHVAARNGLKVVVEELLAKGACVLAVDENASRSNGPRSTPGTAVQKEE.

ANK repeat units follow at residues 7–36 (TDQP…DVNT), 40–69 (EKRT…RVNA), 73–102 (MWLT…DVNA), 106–135 (NWQT…SVNV), 139–168 (GGRT…NINA), 172–201 (KDRR…EVTC), 205–234 (KGYT…EIDE), 238–267 (YGNT…NVNQ), 271–301 (NGFT…DVNI), 305–334 (DGKS…EIDC), 338–367 (DGNT…DTAK), 371–400 (HSMF…EIDT), 404–433 (FGRT…DFHK), 437–466 (CGRT…NVNE), 470–498 (WGRT…DNSE), 531–561 (EGYN…GFEE), 566–595 (ATKS…DLDI), 599–628 (KGRT…SIFV), 633–662 (TKRT…NPEA), 669–698 (KGQT…NVDT), 702–731 (LGCT…SILC), 735–764 (RGRT…SEED), 771–800 (QGYT…FRKF), 803–832 (NPFT…SSIV), 838–867 (KGRT…PVNA), 871–901 (SGKT…DLTV), 905–934 (DLNT…DESL), and 941–970 (ALQT…CVLA).

In terms of assembly, protein phosphatase 6 (PP6) holoenzyme is proposed to be a heterotrimeric complex formed by the catalytic subunit, a SAPS domain-containing subunit (PP6R) and an ankyrin repeat-domain containing regulatory subunit (ARS). Interacts with PPP6R1.

Putative regulatory subunit of protein phosphatase 6 (PP6) that may be involved in the recognition of phosphoprotein substrates. The chain is Serine/threonine-protein phosphatase 6 regulatory ankyrin repeat subunit B (ANKRD44) from Homo sapiens (Human).